We begin with the raw amino-acid sequence, 136 residues long: 6,7-dimethyl-8-ribityllumazine synthase (136 aa).

Residues Phe11, 43–45 (VYD), and 67–69 (CVI) each bind 5-amino-6-(D-ribitylamino)uracil. 72–73 (DT) is a (2S)-2-hydroxy-3-oxobutyl phosphate binding site. The Proton donor role is filled by His75. Leu100 lines the 5-amino-6-(D-ribitylamino)uracil pocket. A (2S)-2-hydroxy-3-oxobutyl phosphate-binding site is contributed by Arg115.

This sequence belongs to the DMRL synthase family. As to quaternary structure, forms an icosahedral capsid composed of 60 subunits, arranged as a dodecamer of pentamers.

It carries out the reaction (2S)-2-hydroxy-3-oxobutyl phosphate + 5-amino-6-(D-ribitylamino)uracil = 6,7-dimethyl-8-(1-D-ribityl)lumazine + phosphate + 2 H2O + H(+). It functions in the pathway cofactor biosynthesis; riboflavin biosynthesis; riboflavin from 2-hydroxy-3-oxobutyl phosphate and 5-amino-6-(D-ribitylamino)uracil: step 1/2. Catalyzes the formation of 6,7-dimethyl-8-ribityllumazine by condensation of 5-amino-6-(D-ribitylamino)uracil with 3,4-dihydroxy-2-butanone 4-phosphate. This is the penultimate step in the biosynthesis of riboflavin. This chain is 6,7-dimethyl-8-ribityllumazine synthase, found in Methanococcus aeolicus (strain ATCC BAA-1280 / DSM 17508 / OCM 812 / Nankai-3).